Here is a 712-residue protein sequence, read N- to C-terminus: DNA ligase (712 aa).

The interval 1–22 (MVQKNEHQGGQSQHSLFAAGPT) is disordered. Residues 53-57 (DDQFD) and Asp-138 each bind NAD(+). Residue Lys-140 is the N6-AMP-lysine intermediate of the active site. Residues Arg-161, Glu-199, Lys-318, and Lys-342 each contribute to the NAD(+) site. Positions 436, 439, 454, and 459 each coordinate Zn(2+). The interval 612-631 (RGGRSGGGSSGSTGEGGLAS) is disordered. Over residues 614–630 (GRSGGGSSGSTGEGGLA) the composition is skewed to gly residues. One can recognise a BRCT domain in the interval 629 to 712 (LASGPLAGKN…MLREAKAASE (84 aa)).

It belongs to the NAD-dependent DNA ligase family. LigA subfamily. It depends on Mg(2+) as a cofactor. Mn(2+) is required as a cofactor.

It carries out the reaction NAD(+) + (deoxyribonucleotide)n-3'-hydroxyl + 5'-phospho-(deoxyribonucleotide)m = (deoxyribonucleotide)n+m + AMP + beta-nicotinamide D-nucleotide.. Its function is as follows. DNA ligase that catalyzes the formation of phosphodiester linkages between 5'-phosphoryl and 3'-hydroxyl groups in double-stranded DNA using NAD as a coenzyme and as the energy source for the reaction. It is essential for DNA replication and repair of damaged DNA. The chain is DNA ligase from Desulfovibrio desulfuricans (strain ATCC 27774 / DSM 6949 / MB).